Reading from the N-terminus, the 354-residue chain is Ferredoxin--NADP reductase (354 aa).

FAD contacts are provided by Asp-39, Gln-47, Tyr-52, Val-92, Phe-127, Asp-296, and Thr-337.

It belongs to the ferredoxin--NADP reductase type 2 family. In terms of assembly, homodimer. The cofactor is FAD.

It carries out the reaction 2 reduced [2Fe-2S]-[ferredoxin] + NADP(+) + H(+) = 2 oxidized [2Fe-2S]-[ferredoxin] + NADPH. The sequence is that of Ferredoxin--NADP reductase from Albidiferax ferrireducens (strain ATCC BAA-621 / DSM 15236 / T118) (Rhodoferax ferrireducens).